The sequence spans 256 residues: PGL/p-HBAD biosynthesis glycosyltransferase Mb2981 (256 aa).

Belongs to the glycosyltransferase 2 family.

Its function is as follows. Involved in glycosylation steps downstream of mono-O-methyl-glycosyl-p-hydroxybenzoic acid derivative (p-HBAD I) and 2-O-methyl-rhamnosyl-phenolphthiocerol dimycocerosate (mycoside B) during the p-hydroxybenzoic acid derivatives (p-HBAD) and glycosylated phenolphthiocerol dimycocerosates (PGL) biosynthesis. This chain is PGL/p-HBAD biosynthesis glycosyltransferase Mb2981, found in Mycobacterium bovis (strain ATCC BAA-935 / AF2122/97).